We begin with the raw amino-acid sequence, 190 residues long: Adenylate kinase (190 aa).

Gly12–Thr17 lines the ATP pocket. Positions Ser34–Val63 are NMP. AMP-binding positions include Thr35, Arg40, Asn61–Val63, Gly88–Arg91, and Gln95. Residues Gly130 to Asp136 are LID. Arg131 is an ATP binding site. 2 residues coordinate AMP: Arg133 and Arg145. Arg173 contacts ATP.

This sequence belongs to the adenylate kinase family. In terms of assembly, monomer.

The protein resides in the cytoplasm. It carries out the reaction AMP + ATP = 2 ADP. It functions in the pathway purine metabolism; AMP biosynthesis via salvage pathway; AMP from ADP: step 1/1. Its function is as follows. Catalyzes the reversible transfer of the terminal phosphate group between ATP and AMP. Plays an important role in cellular energy homeostasis and in adenine nucleotide metabolism. The chain is Adenylate kinase from Helicobacter hepaticus (strain ATCC 51449 / 3B1).